A 349-amino-acid polypeptide reads, in one-letter code: tRNA pseudouridine synthase D (349 aa).

Phe-27 serves as a coordination point for substrate. Catalysis depends on Asp-80, which acts as the Nucleophile. Asn-129 contributes to the substrate binding site. Residues 155-303 (GVPNYFGAQR…VEAARRAMLL (149 aa)) form the TRUD domain. Residue Phe-329 participates in substrate binding.

It belongs to the pseudouridine synthase TruD family.

It carries out the reaction uridine(13) in tRNA = pseudouridine(13) in tRNA. In terms of biological role, responsible for synthesis of pseudouridine from uracil-13 in transfer RNAs. The sequence is that of tRNA pseudouridine synthase D from Escherichia coli O6:H1 (strain CFT073 / ATCC 700928 / UPEC).